Here is a 196-residue protein sequence, read N- to C-terminus: Adenylate kinase (196 aa).

9–17 (GIPGVGKST) serves as a coordination point for ATP.

The protein belongs to the archaeal adenylate kinase family.

Its subcellular location is the cytoplasm. The catalysed reaction is AMP + ATP = 2 ADP. The protein is Adenylate kinase of Thermococcus onnurineus (strain NA1).